The following is a 608-amino-acid chain: N(6)-adenosine-methyltransferase MT-A70-like protein (608 aa).

Residues 250–265 (KKKQERRDEKELRPDV) are compositionally biased toward basic and acidic residues. Residues 250–272 (KKKQERRDEKELRPDVDAGENVT) form a disordered region. S-adenosyl-L-methionine contacts are provided by residues 395 to 396 (DL) and Asp-413. The interval 414 to 428 (PPWDIHMELPYGTMS) is gate loop 1. The interphase loop stretch occupies residues 480–497 (QLQRIIRTGRTGHWLNHG). Residues 483–496 (RIIRTGRTGHWLNH) form a positively charged region required for RNA-binding region. The tract at residues 525 to 533 (VRATSHKPD) is gate loop 2. S-adenosyl-L-methionine is bound by residues Lys-531, 554–557 (RPHN), and 567–568 (NQ).

Belongs to the MT-A70-like family. In terms of assembly, component of the WMM complex, a N6-methyltransferase complex composed of a catalytic subcomplex, named MAC, and of an associated subcomplex, named MACOM. The MAC subcomplex is composed of Ime4/Mettl3 and Mettl14. The MACOM subcomplex is composed of fl(2)d, Flacc/Xio, Hakai, vir, and, in some cases of nito. Expressed in testes. In the ovaries, detected in germaria, prefollicle, follicle and polar cells (at protein levels). Detected in the ooplasm and in the cells of the 16-cell cyst of early stages (at protein levels).

It is found in the nucleus. It catalyses the reaction an adenosine in mRNA + S-adenosyl-L-methionine = an N(6)-methyladenosine in mRNA + S-adenosyl-L-homocysteine + H(+). Functionally, catalytic component of the WMM complex, a complex that mediates N6-methyladenosine (m6A) methylation of mRNAs, a modification that plays a role in the efficiency of mRNA splicing and is required for sex determination. In the heterodimer formed with Mettl14, constitutes the catalytic core. Required for sex determination and dosage compensation via Sxl alternative splicing: m6A methylation acts as a key regulator of Sxl pre-mRNA and promotes female-specific alternative splicing of Sxl, which determines female physiognomy. M6A methylation is also required for neuronal functions. During oogenesis, required for egg chamber development probably as part of the N/Notch signaling. The polypeptide is N(6)-adenosine-methyltransferase MT-A70-like protein (Drosophila melanogaster (Fruit fly)).